A 144-amino-acid polypeptide reads, in one-letter code: Oleosin H2 (144 aa).

Ala2 bears the N-acetylalanine mark. The next 3 helical transmembrane spans lie at 28-48 (VLAVVTLFPLGAVLLCLAGLI), 53-73 (IIGLAVATPLFVIFSPILVPA), and 75-95 (LTIALAVTGFLTSGAFGITAL). Positions 61–72 (PLFVIFSPILVP) match the Proline-knot motif. Residues 124–144 (QETVGQKTREAGQRSQDVIRP) form a disordered region.

The protein belongs to the oleosin family. Expressed in seeds (at protein level).

It is found in the lipid droplet. It localises to the membrane. May have a structural role to stabilize the lipid body during desiccation of the seed by preventing coalescence of the oil. Probably interacts with both lipid and phospholipid moieties of lipid bodies. May also provide recognition signals for specific lipase anchorage in lipolysis during seedling growth. The polypeptide is Oleosin H2 (Sesamum indicum (Oriental sesame)).